Here is a 372-residue protein sequence, read N- to C-terminus: N-methyl-L-tryptophan oxidase (372 aa).

Residue 4-34 (DLIIIGSGSVGAAAGYYATRAGLKVLMTDAH) participates in FAD binding. At cysteine 307 the chain carries S-8alpha-FAD cysteine.

Belongs to the MSOX/MTOX family. MTOX subfamily. As to quaternary structure, monomer. Requires FAD as cofactor.

The catalysed reaction is N(alpha)-methyl-L-tryptophan + O2 + H2O = L-tryptophan + formaldehyde + H2O2. Its function is as follows. Catalyzes the oxidative demethylation of N-methyl-L-tryptophan. The sequence is that of N-methyl-L-tryptophan oxidase from Salmonella agona (strain SL483).